A 280-amino-acid polypeptide reads, in one-letter code: Dexamethasone-induced Ras-related protein 1 (280 aa).

Cys11 carries the post-translational modification S-nitrosocysteine. 31-38 (GSSKVGKT) is a binding site for GTP. An Effector region motif is present at residues 53 to 61 (YTPTIEDFH). Residues 78-82 (DTSGN) and 145-148 (NKGD) contribute to the GTP site. Cysteine methyl ester is present on Cys277. Cys277 is lipidated: S-farnesyl cysteine. The propeptide at 278 to 280 (VIS) is removed in mature form.

It belongs to the small GTPase superfamily. RasD family. In terms of assembly, component of a complex, at least composed of APBB1, RASD1/DEXRAS1 and APP. Interacts with APBB1/FE65. Forms a ternary complex with CAPON and NOS1. Post-translationally, S-nitrosylation stimulates guanine-nucleotide exchange activity. As to expression, expressed in brain, heart, kidney and liver.

Its subcellular location is the cell membrane. It is found in the cytoplasm. The protein resides in the perinuclear region. It localises to the nucleus. In terms of biological role, small GTPase. Negatively regulates the transcription regulation activity of the APBB1/FE65-APP complex via its interaction with APBB1/FE65. The sequence is that of Dexamethasone-induced Ras-related protein 1 (Rasd1) from Mus musculus (Mouse).